We begin with the raw amino-acid sequence, 168 residues long: DAZ-associated protein 2 (168 aa).

A compositionally biased stretch (low complexity) spans 1–13; sequence MNSKGQYPTQPTY. The tract at residues 1–25 is disordered; sequence MNSKGQYPTQPTYPVQPPGNPVYPQ. The PPAY signature appears at 39–42; sequence PPAY. A Phosphoserine modification is found at serine 77.

As to quaternary structure, interacts with SOX6. Interacts with DAZ1 and DAZL. Interacts with IL17RB. May interact with FAM168B. Interacts with INCA1. Interacts with EIF4G1 and EIF4G2. Interacts (via PPAY motif) with NEDD4 (via WW domains). Interacts with transcription factor TCF4; the interaction results in localization of DAZAP2 to the nucleus. Interacts with transcription factors TCF7 and TCF7L1. Interacts with transcription factor LEF1. Interacts with serine/threonine-protein kinase HIPK2; the interaction results in phosphorylation of DAZAP2 which causes localization of DAZAP2 to the nucleus, reduces interaction of DAZAP2 with HIPK2 and prevents DAZAP2-dependent degradation of HIPK2. Interacts with ubiquitin ligase SIAH1; the interaction is decreased following phosphorylation of DAZAP2 by HIPK2. Interacts with TP53; the interaction is triggered by DNA damage. Ubiquitinated by SMURF2, leading to proteasomal degradation. Ubiquitinated by NEDD4, leading to proteasomal degradation. In terms of processing, following DNA damage, phosphorylated by HIPK2 which promotes DAZAP2 localization to the nucleus, reduces interaction of DAZAP2 with HIPK2 and SIAH1, and prevents DAZAP2-dependent ubiquitination of HIPK2 by E3 ubiquitin-protein ligase SIAH1 and subsequent HIPK2 proteasomal degradation. Widely expressed. Highly expressed in brain.

It localises to the cytoplasm. It is found in the nucleus. The protein resides in the nucleus speckle. Its subcellular location is the nuclear body. The protein localises to the stress granule. In unstressed cells, promotes SIAH1-mediated polyubiquitination and degradation of the serine/threonine-protein kinase HIPK2, probably by acting as a loading factor that potentiates complex formation between HIPK2 and ubiquitin ligase SIAH1. In response to DNA damage, localizes to the nucleus following phosphorylation by HIPK2 and modulates the expression of a subset of TP53/p53 target genes by binding to TP53 at target gene promoters. This limits the expression of a number of cell death-mediating TP53 target genes, reducing DNA damage-induced cell death. Enhances the binding of transcription factor TCF7L2/TCF4, a Wnt signaling pathway effector, to the promoters of target genes. Plays a role in stress granule formation. This chain is DAZ-associated protein 2 (Dazap2), found in Mus musculus (Mouse).